A 61-amino-acid chain; its full sequence is UPF0434 protein PSPTO_3844 (61 aa).

The protein belongs to the UPF0434 family.

The protein is UPF0434 protein PSPTO_3844 of Pseudomonas syringae pv. tomato (strain ATCC BAA-871 / DC3000).